Here is a 764-residue protein sequence, read N- to C-terminus: Thyrotropin receptor (764 aa).

Positions 1–21 (MRPTPLLRLALLLVLPSSLWG) are cleaved as a signal peptide. The Extracellular segment spans residues 22-413 (ERCPSPPCEC…EFNPCEDIMG (392 aa)). A disulfide bond links Cys31 and Cys41. The stretch at 51–74 (PPSTQTLKFIETHLKTIPSRAFSN) is one LRR 1 repeat. Asn77 and Asn99 each carry an N-linked (GlcNAc...) asparagine glycan. LRR repeat units follow at residues 125–150 (LPLL…IYST), 152–174 (VFFI…AFQG), 176–199 (SNET…AFNG), 201–223 (KLDA…AFAG), and 225–248 (YSGP…GLEH). N-linked (GlcNAc...) asparagine glycosylation is found at Asn177 and Asn198. Residue Asn302 is glycosylated (N-linked (GlcNAc...) asparagine). The residue at position 385 (Tyr385) is a Sulfotyrosine. Residues 414–441 (YKFLRIVVWFVSLLALLGNVFVLVILLT) traverse the membrane as a helical segment. Over 442–450 (SHYKLTVPR) the chain is Cytoplasmic. A helical membrane pass occupies residues 451-473 (FLMCNLAFADFCMGLYLLLIASV). Residues 474 to 494 (DLYTQSEYYNHAIDWQTGPGC) are Extracellular-facing. Cys494 and Cys569 are disulfide-bonded. A helical membrane pass occupies residues 495 to 517 (NTAGFFTVFASELSVYTLTVITL). The Cytoplasmic portion of the chain corresponds to 518–537 (ERWYAITFAMHLDRKIRLWH). Residues 538–560 (AYVIMLGGWVCCFLLALLPLVGI) form a helical membrane-spanning segment. Residues 561 to 580 (SSYAKVSICLPMDTETPLAL) are Extracellular-facing. The chain crosses the membrane as a helical span at residues 581-602 (AYIILVLLLNIIAFIIVCACYV). The Cytoplasmic segment spans residues 603–625 (KIYITVRNPHYNPGDKDTRIAKR). A helical membrane pass occupies residues 626-649 (MAVLIFTDFMCMAPISFYALSALM). Over 650-660 (NKPLITVTNSK) the chain is Extracellular. A helical transmembrane segment spans residues 661 to 682 (ILLVLFYPLNSCANPFLYAIFT). Residues 683–764 (KAFQRDVFML…TSKEYKQTVL (82 aa)) are Cytoplasmic-facing. The PDZ-binding signature appears at 762 to 764 (TVL).

Belongs to the G-protein coupled receptor 1 family. FSH/LSH/TSH subfamily. Interacts with heterodimer GPHA2:GPHB5; this interaction stimulates cAMP production. Interacts (via the PDZ-binding motif) with SCRIB; regulates TSHR trafficking and function. In terms of processing, glycosylated. Sulfated. Sulfation on Tyr-385 plays a role in thyrotropin receptor binding and activation.

It is found in the cell membrane. The protein localises to the basolateral cell membrane. Its function is as follows. Receptor for the thyroid-stimulating hormone (TSH) or thyrotropin. Also acts as a receptor for the heterodimeric glycoprotein hormone (GPHA2:GPHB5) or thyrostimulin. The activity of this receptor is mediated by G proteins which activate adenylate cyclase. Plays a central role in controlling thyroid cell metabolism. This chain is Thyrotropin receptor (TSHR), found in Ovis aries (Sheep).